Reading from the N-terminus, the 505-residue chain is Ion-translocating oxidoreductase complex subunit C (505 aa).

4Fe-4S ferredoxin-type domains lie at 381-410 (ELNN…EQLY) and 420-449 (KTQI…MSYY). 8 residues coordinate [4Fe-4S] cluster: Cys-390, Cys-393, Cys-396, Cys-400, Cys-429, Cys-432, Cys-435, and Cys-439.

The protein belongs to the 4Fe4S bacterial-type ferredoxin family. RnfC subfamily. As to quaternary structure, the complex is composed of six subunits: RnfA, RnfB, RnfC, RnfD, RnfE and RnfG. It depends on [4Fe-4S] cluster as a cofactor.

Its subcellular location is the cell inner membrane. Its function is as follows. Part of a membrane-bound complex that couples electron transfer with translocation of ions across the membrane. The polypeptide is Ion-translocating oxidoreductase complex subunit C (Buchnera aphidicola subsp. Baizongia pistaciae (strain Bp)).